Consider the following 186-residue polypeptide: Elongation factor P (186 aa).

The protein belongs to the elongation factor P family.

The protein localises to the cytoplasm. It participates in protein biosynthesis; polypeptide chain elongation. Involved in peptide bond synthesis. Stimulates efficient translation and peptide-bond synthesis on native or reconstituted 70S ribosomes in vitro. Probably functions indirectly by altering the affinity of the ribosome for aminoacyl-tRNA, thus increasing their reactivity as acceptors for peptidyl transferase. The polypeptide is Elongation factor P (Shewanella sp. (strain ANA-3)).